Reading from the N-terminus, the 89-residue chain is Small ribosomal subunit protein uS15 (89 aa).

Belongs to the universal ribosomal protein uS15 family. As to quaternary structure, part of the 30S ribosomal subunit. Forms a bridge to the 50S subunit in the 70S ribosome, contacting the 23S rRNA.

Its function is as follows. One of the primary rRNA binding proteins, it binds directly to 16S rRNA where it helps nucleate assembly of the platform of the 30S subunit by binding and bridging several RNA helices of the 16S rRNA. Functionally, forms an intersubunit bridge (bridge B4) with the 23S rRNA of the 50S subunit in the ribosome. The sequence is that of Small ribosomal subunit protein uS15 from Bordetella avium (strain 197N).